The sequence spans 620 residues: Apoptosis regulator MC163R (620 aa).

A helical membrane pass occupies residues 113–133 (APLPLLLLPLLLPPMILLFFL).

The protein localises to the host mitochondrion. It is found in the host membrane. Plays a role in the inhibition of host apoptosis. Prevents host TNF-alpha-induced mitochondrial membrane permeabilization and reduces caspase-3/CASP3 and PARP1 cleavage induced by the intrinsic apoptotic pathway. In Homo sapiens (Human), this protein is Apoptosis regulator MC163R (MC163R).